Reading from the N-terminus, the 139-residue chain is Putative pre-16S rRNA nuclease (139 aa).

This sequence belongs to the YqgF nuclease family.

It localises to the cytoplasm. In terms of biological role, could be a nuclease involved in processing of the 5'-end of pre-16S rRNA. In Streptococcus equi subsp. equi (strain 4047), this protein is Putative pre-16S rRNA nuclease.